Here is a 226-residue protein sequence, read N- to C-terminus: N-(5'-phosphoribosyl)anthranilate isomerase (226 aa).

Belongs to the TrpF family.

It catalyses the reaction N-(5-phospho-beta-D-ribosyl)anthranilate = 1-(2-carboxyphenylamino)-1-deoxy-D-ribulose 5-phosphate. Its pathway is amino-acid biosynthesis; L-tryptophan biosynthesis; L-tryptophan from chorismate: step 3/5. The polypeptide is N-(5'-phosphoribosyl)anthranilate isomerase (Synechococcus sp. (strain JA-3-3Ab) (Cyanobacteria bacterium Yellowstone A-Prime)).